A 556-amino-acid chain; its full sequence is (S)-N-methylcanadine 1-hydroxylase CYP82Y1 (556 aa).

A helical membrane pass occupies residues 18–38; the sequence is TAVGTLILAFLLTLSPVIIYY. Position 500 (Cys-500) interacts with heme.

It belongs to the cytochrome P450 family. Requires heme as cofactor. As to expression, highly expressed in capsules. Expressed is stems.

The protein localises to the membrane. The catalysed reaction is (S)-cis-N-methylcanadine + reduced [NADPH--hemoprotein reductase] + O2 = (S)-1-hydroxy-N-methylcanadine + oxidized [NADPH--hemoprotein reductase] + H2O + H(+). It participates in alkaloid biosynthesis. Functionally, cytochrome P450 involved in the biosynthesis of the benzylisoquinoline alkaloid noscapine. Converts (S)-N-methylcanadine to (S)-1-hydroxy-N-methylcanadine. This chain is (S)-N-methylcanadine 1-hydroxylase CYP82Y1, found in Papaver somniferum (Opium poppy).